We begin with the raw amino-acid sequence, 483 residues long: Aspartyl/glutamyl-tRNA(Asn/Gln) amidotransferase subunit B (483 aa).

Belongs to the GatB/GatE family. GatB subfamily. In terms of assembly, heterotrimer of A, B and C subunits.

It catalyses the reaction L-glutamyl-tRNA(Gln) + L-glutamine + ATP + H2O = L-glutaminyl-tRNA(Gln) + L-glutamate + ADP + phosphate + H(+). It carries out the reaction L-aspartyl-tRNA(Asn) + L-glutamine + ATP + H2O = L-asparaginyl-tRNA(Asn) + L-glutamate + ADP + phosphate + 2 H(+). In terms of biological role, allows the formation of correctly charged Asn-tRNA(Asn) or Gln-tRNA(Gln) through the transamidation of misacylated Asp-tRNA(Asn) or Glu-tRNA(Gln) in organisms which lack either or both of asparaginyl-tRNA or glutaminyl-tRNA synthetases. The reaction takes place in the presence of glutamine and ATP through an activated phospho-Asp-tRNA(Asn) or phospho-Glu-tRNA(Gln). The polypeptide is Aspartyl/glutamyl-tRNA(Asn/Gln) amidotransferase subunit B (Brachyspira hyodysenteriae (strain ATCC 49526 / WA1)).